Here is a 228-residue protein sequence, read N- to C-terminus: Phosphoribosylformylglycinamidine synthase subunit PurQ (228 aa).

The region spanning 2 to 228 (TVVVVQFGGS…DGKGILQAFG (227 aa)) is the Glutamine amidotransferase type-1 domain. The Nucleophile role is filled by cysteine 88. Active-site residues include histidine 205 and glutamate 207.

Part of the FGAM synthase complex composed of 1 PurL, 1 PurQ and 2 PurS subunits.

It is found in the cytoplasm. The catalysed reaction is N(2)-formyl-N(1)-(5-phospho-beta-D-ribosyl)glycinamide + L-glutamine + ATP + H2O = 2-formamido-N(1)-(5-O-phospho-beta-D-ribosyl)acetamidine + L-glutamate + ADP + phosphate + H(+). It catalyses the reaction L-glutamine + H2O = L-glutamate + NH4(+). Its pathway is purine metabolism; IMP biosynthesis via de novo pathway; 5-amino-1-(5-phospho-D-ribosyl)imidazole from N(2)-formyl-N(1)-(5-phospho-D-ribosyl)glycinamide: step 1/2. Functionally, part of the phosphoribosylformylglycinamidine synthase complex involved in the purines biosynthetic pathway. Catalyzes the ATP-dependent conversion of formylglycinamide ribonucleotide (FGAR) and glutamine to yield formylglycinamidine ribonucleotide (FGAM) and glutamate. The FGAM synthase complex is composed of three subunits. PurQ produces an ammonia molecule by converting glutamine to glutamate. PurL transfers the ammonia molecule to FGAR to form FGAM in an ATP-dependent manner. PurS interacts with PurQ and PurL and is thought to assist in the transfer of the ammonia molecule from PurQ to PurL. In Haloquadratum walsbyi (strain DSM 16790 / HBSQ001), this protein is Phosphoribosylformylglycinamidine synthase subunit PurQ.